The sequence spans 552 residues: Chaperonin GroEL (552 aa).

ATP-binding positions include 29–32 (TAGP), Lys-50, 86–90 (DGTTT), Gly-420, and Asp-501.

Belongs to the chaperonin (HSP60) family. In terms of assembly, forms a cylinder of 14 subunits composed of two heptameric rings stacked back-to-back. Interacts with the co-chaperonin GroES.

It is found in the cytoplasm. It catalyses the reaction ATP + H2O + a folded polypeptide = ADP + phosphate + an unfolded polypeptide.. In terms of biological role, together with its co-chaperonin GroES, plays an essential role in assisting protein folding. The GroEL-GroES system forms a nano-cage that allows encapsulation of the non-native substrate proteins and provides a physical environment optimized to promote and accelerate protein folding. The sequence is that of Chaperonin GroEL from Wolbachia pipientis subsp. Culex pipiens (strain wPip).